We begin with the raw amino-acid sequence, 386 residues long: Succinate--CoA ligase [ADP-forming] subunit beta (386 aa).

The ATP-grasp domain occupies 9–244; that stretch reads KEILRKYGVP…HDEEDPLETR (236 aa). ATP contacts are provided by residues lysine 46, 53-55, glutamate 99, cysteine 102, and glutamate 107; that span reads GRG. Mg(2+) is bound by residues asparagine 199 and aspartate 213. Substrate contacts are provided by residues asparagine 264 and 321–323; that span reads GIM.

The protein belongs to the succinate/malate CoA ligase beta subunit family. In terms of assembly, heterotetramer of two alpha and two beta subunits. It depends on Mg(2+) as a cofactor.

It carries out the reaction succinate + ATP + CoA = succinyl-CoA + ADP + phosphate. It catalyses the reaction GTP + succinate + CoA = succinyl-CoA + GDP + phosphate. It functions in the pathway carbohydrate metabolism; tricarboxylic acid cycle; succinate from succinyl-CoA (ligase route): step 1/1. Functionally, succinyl-CoA synthetase functions in the citric acid cycle (TCA), coupling the hydrolysis of succinyl-CoA to the synthesis of either ATP or GTP and thus represents the only step of substrate-level phosphorylation in the TCA. The beta subunit provides nucleotide specificity of the enzyme and binds the substrate succinate, while the binding sites for coenzyme A and phosphate are found in the alpha subunit. The protein is Succinate--CoA ligase [ADP-forming] subunit beta of Rickettsia massiliae (strain Mtu5).